The chain runs to 152 residues: Male-specific protein scotti (152 aa).

Belongs to the male-specific scotti family.

Post-meiotically transcribed gene that has a role in late spermiogenesis; required for actin cone progression during spermatid individualization. This is Male-specific protein scotti from Drosophila mojavensis (Fruit fly).